The following is a 308-amino-acid chain: Methionyl-tRNA formyltransferase (308 aa).

110–113 (SLLP) provides a ligand contact to (6S)-5,6,7,8-tetrahydrofolate.

Belongs to the Fmt family.

The catalysed reaction is L-methionyl-tRNA(fMet) + (6R)-10-formyltetrahydrofolate = N-formyl-L-methionyl-tRNA(fMet) + (6S)-5,6,7,8-tetrahydrofolate + H(+). Attaches a formyl group to the free amino group of methionyl-tRNA(fMet). The formyl group appears to play a dual role in the initiator identity of N-formylmethionyl-tRNA by promoting its recognition by IF2 and preventing the misappropriation of this tRNA by the elongation apparatus. This is Methionyl-tRNA formyltransferase from Neisseria meningitidis serogroup C (strain 053442).